Reading from the N-terminus, the 436-residue chain is Trigger factor (436 aa).

In terms of domain architecture, PPIase FKBP-type spans 163–248 (GDRVVLDFAG…VKEVAEGVLP (86 aa)).

Belongs to the FKBP-type PPIase family. Tig subfamily.

It is found in the cytoplasm. It carries out the reaction [protein]-peptidylproline (omega=180) = [protein]-peptidylproline (omega=0). Involved in protein export. Acts as a chaperone by maintaining the newly synthesized protein in an open conformation. Functions as a peptidyl-prolyl cis-trans isomerase. This chain is Trigger factor, found in Bordetella bronchiseptica (strain ATCC BAA-588 / NCTC 13252 / RB50) (Alcaligenes bronchisepticus).